The sequence spans 395 residues: uncharacterized protein (395 aa).

The segment at 247-270 is disordered; it reads GGTVVPPNPDQPNPTPPDSSSPNY. Over residues 252–265 the composition is skewed to pro residues; it reads PPNPDQPNPTPPDS.

This is an uncharacterized protein from Vibrio cholerae serotype O1 (strain ATCC 39315 / El Tor Inaba N16961).